The sequence spans 25 residues: Phospholipase A1 verutoxin-2a (25 aa).

It belongs to the AB hydrolase superfamily. Lipase family. In terms of processing, contains six disulfide bonds. Expressed by the venom gland.

It localises to the secreted. It carries out the reaction a 1,2-diacyl-sn-glycero-3-phosphocholine + H2O = a 2-acyl-sn-glycero-3-phosphocholine + a fatty acid + H(+). The catalysed reaction is 1-(9Z-octadecenoyl)-2-hexadecanoyl-sn-glycero-3-phosphocholine + H2O = 2-hexadecanoyl-sn-glycero-3-phosphocholine + (9Z)-octadecenoate + H(+). It catalyses the reaction a 1-acyl-sn-glycero-3-phosphocholine + H2O = sn-glycerol 3-phosphocholine + a fatty acid + H(+). It participates in phospholipid metabolism. With respect to regulation, activity is maximal in the presence of calcium. However, unlike phospholipases A2 whose catalytic activity is strictly calcium-dependent, this enzyme shows considerable catalytic activity on phosphatidylcholine emulsified in calcium free solution; the catalytic activity of VT-2a assayed in the absence of calcium ions is 18-20% of that assayed in solution containing calcium ions. Catalyzes the hydrolysis of glycerophospholipids such as phosphatidylcholine (1,2-diacyl-sn-glycero-3-phosphocholine) and has a moderate activity to hydrolyze lysoglycerophospholipids such as lysophosphatidylcholine (1-acyl-sn-glycero-3-phosphocholine), but is unable to hydrolyze sphingomyelin. In addition to acting as an allergen, it possesses a potent hemolytic activity on red blood cells of mice (98.8% of hemolysis at 3.0 ug/ml). The polypeptide is Phospholipase A1 verutoxin-2a (Vespa velutina (Asian yellow-legged hornet)).